The following is a 345-amino-acid chain: Dihydroorotate dehydrogenase (quinone) (345 aa).

FMN contacts are provided by residues alanine 65–lysine 69 and threonine 89. Lysine 69 is a binding site for substrate. A substrate-binding site is contributed by asparagine 114 to phenylalanine 118. Positions 142 and 175 each coordinate FMN. Asparagine 175 serves as a coordination point for substrate. Catalysis depends on serine 178, which acts as the Nucleophile. Asparagine 180 is a binding site for substrate. Positions 220 and 248 each coordinate FMN. A substrate-binding site is contributed by asparagine 249–threonine 250. FMN is bound by residues glycine 271, glycine 300, and tyrosine 321–threonine 322.

The protein belongs to the dihydroorotate dehydrogenase family. Type 2 subfamily. As to quaternary structure, monomer. Requires FMN as cofactor.

Its subcellular location is the cell membrane. The enzyme catalyses (S)-dihydroorotate + a quinone = orotate + a quinol. It participates in pyrimidine metabolism; UMP biosynthesis via de novo pathway; orotate from (S)-dihydroorotate (quinone route): step 1/1. In terms of biological role, catalyzes the conversion of dihydroorotate to orotate with quinone as electron acceptor. This Burkholderia lata (strain ATCC 17760 / DSM 23089 / LMG 22485 / NCIMB 9086 / R18194 / 383) protein is Dihydroorotate dehydrogenase (quinone).